Here is a 138-residue protein sequence, read N- to C-terminus: Small ribosomal subunit protein uS11c (138 aa).

The interval 1–24 (MTKPIPRIGSRRNGRIGSRKSGRR) is disordered. Positions 9 to 24 (GSRRNGRIGSRKSGRR) are enriched in basic residues.

This sequence belongs to the universal ribosomal protein uS11 family. Part of the 30S ribosomal subunit.

It is found in the plastid. The protein localises to the chloroplast. The sequence is that of Small ribosomal subunit protein uS11c from Liriodendron tulipifera (Tuliptree).